The sequence spans 330 residues: tRNA U34 carboxymethyltransferase (330 aa).

Residues Lys91, Trp105, Lys110, Gly130, 152-154 (DPS), 181-182 (IE), Met196, Tyr200, and Arg315 each bind carboxy-S-adenosyl-L-methionine.

It belongs to the class I-like SAM-binding methyltransferase superfamily. CmoB family. As to quaternary structure, homotetramer.

It catalyses the reaction carboxy-S-adenosyl-L-methionine + 5-hydroxyuridine(34) in tRNA = 5-carboxymethoxyuridine(34) in tRNA + S-adenosyl-L-homocysteine + H(+). Its function is as follows. Catalyzes carboxymethyl transfer from carboxy-S-adenosyl-L-methionine (Cx-SAM) to 5-hydroxyuridine (ho5U) to form 5-carboxymethoxyuridine (cmo5U) at position 34 in tRNAs. The chain is tRNA U34 carboxymethyltransferase from Shewanella sediminis (strain HAW-EB3).